The following is a 413-amino-acid chain: Phosphatidylcholine-sterol acyltransferase (413 aa).

Positions 1 to 22 are cleaved as a signal peptide; it reads GRTGAGFTLLTLLLLLPQPTSQ. A disulfide bond links C72 and C96. N-linked (GlcNAc...) asparagine glycosylation occurs at N106. Catalysis depends on S203, which acts as the Charge relay system. The Nucleophile role is filled by S203. N294 carries N-linked (GlcNAc...) asparagine glycosylation. C335 and C378 are disulfide-bonded. Catalysis depends on charge relay system residues D367 and H399. N-linked (GlcNAc...) asparagine glycosylation is present at N406.

This sequence belongs to the AB hydrolase superfamily. Lipase family. As to expression, detected in blood plasma (at protein level). Expressed in liver, brain and adrenal glands. Lower expression in testes. In laying hens, expressed higher in brain than in liver. In roosters, higher levels in liver than in brain.

The protein resides in the secreted. It carries out the reaction a sterol + a 1,2-diacyl-sn-glycero-3-phosphocholine = a sterol ester + a 1-acyl-sn-glycero-3-phosphocholine. APOA1 is the most potent activator in plasma. Also activated by APOE, APOC1 and APOA4. Functionally, central enzyme in the extracellular metabolism of plasma lipoproteins. Synthesized mainly in the liver and secreted into plasma where it converts cholesterol and phosphatidylcholines (lecithins) to cholesteryl esters and lysophosphatidylcholines on the surface of high and low density lipoproteins (HDLs and LDLs). The cholesterol ester is then transported back to the liver. Also produced in the brain by primary astrocytes, and esterifies free cholesterol on nascent APOE-containing lipoproteins secreted from glia and influences cerebral spinal fluid (CSF) APOE- and APOA1 levels. Together with APOE and the cholesterol transporter ABCA1, plays a key role in the maturation of glial-derived, nascent lipoproteins. Required for remodeling high-density lipoprotein particles into their spherical forms. Has a preference for plasma 16:0-18:2 or 18:O-18:2 phosphatidylcholines. In Gallus gallus (Chicken), this protein is Phosphatidylcholine-sterol acyltransferase (LCAT).